The chain runs to 717 residues: Eukaryotic translation initiation factor 3 subunit B (717 aa).

Residues 1–89 are sufficient for interaction with HCR1 and TIF32; the sequence is MTVEDNLDID…VFIEYETGEM (89 aa). Residues 1 to 216 are sufficient for interaction with PIC8; that stretch reads MTVEDNLDID…GVQLWGGPDW (216 aa). Positions 28–115 constitute an RRM domain; sequence SFIVVDGAPV…HKLLVNKLSE (88 aa). WD repeat units lie at residues 183–221, 223–284, 293–332, 445–484, 506–549, and 564–609; these read RERW…PPIC, FQHP…PVRT, GASM…LLDK, ELKD…NRHT, FDKK…DRKH, and SEHY…QREE.

The protein belongs to the eIF-3 subunit B family. In terms of assembly, component of the eukaryotic translation initiation factor 3 (eIF-3) complex.

The protein localises to the cytoplasm. Its function is as follows. RNA-binding component of the eukaryotic translation initiation factor 3 (eIF-3) complex, which is involved in protein synthesis of a specialized repertoire of mRNAs and, together with other initiation factors, stimulates binding of mRNA and methionyl-tRNAi to the 40S ribosome. The eIF-3 complex specifically targets and initiates translation of a subset of mRNAs involved in cell proliferation. In Yarrowia lipolytica (strain CLIB 122 / E 150) (Yeast), this protein is Eukaryotic translation initiation factor 3 subunit B.